Reading from the N-terminus, the 41-residue chain is Alpha-conotoxin CIB (41 aa).

Residues 1–21 (SDGRNEAANDEASDVIELALK) constitute a propeptide that is removed on maturation. Cystine bridges form between Cys-23–Cys-29 and Cys-24–Cys-37. A ser-Xaa-Pro motif, crucial for potent interaction with nAChR region spans residues 25-27 (SNP). Position 37 is a cysteine amide (Cys-37).

It belongs to the conotoxin A superfamily. Expressed by the venom duct.

It localises to the secreted. Functionally, alpha-conotoxins act on postsynaptic membranes, they bind to the nicotinic acetylcholine receptors (nAChR) and thus inhibit them. This toxin blocks rat neuronal nAChR alpha-3-beta-2/CHRNA3-CHRNB2 (IC(50)=128.9 nM) and alpha-7/CHRNA7 (IC(50)=1511 nM). In vivo, intramuscular injection into zebrafish does not produce any effect on the locomotion of zebrafish. The sequence is that of Alpha-conotoxin CIB from Conus catus (Cat cone).